The chain runs to 289 residues: Diaminopimelate epimerase (289 aa).

Residues N13, Q47, and N67 each contribute to the substrate site. Residue C76 is the Proton donor of the active site. Substrate is bound by residues G77–N78, N167, N200, and E218–R219. C227 acts as the Proton acceptor in catalysis. G228–T229 contacts substrate.

The protein belongs to the diaminopimelate epimerase family. As to quaternary structure, homodimer.

It localises to the cytoplasm. It catalyses the reaction (2S,6S)-2,6-diaminopimelate = meso-2,6-diaminopimelate. It participates in amino-acid biosynthesis; L-lysine biosynthesis via DAP pathway; DL-2,6-diaminopimelate from LL-2,6-diaminopimelate: step 1/1. Functionally, catalyzes the stereoinversion of LL-2,6-diaminopimelate (L,L-DAP) to meso-diaminopimelate (meso-DAP), a precursor of L-lysine and an essential component of the bacterial peptidoglycan. The chain is Diaminopimelate epimerase from Burkholderia pseudomallei (strain K96243).